We begin with the raw amino-acid sequence, 520 residues long: Cytochrome P450 monooxygenase vrtE (520 aa).

The chain crosses the membrane as a helical span at residues 16-36; sequence ALSLLHYVLGAIFLLLLFHML. An N-linked (GlcNAc...) asparagine glycan is attached at Asn137. Residue Cys459 participates in heme binding.

This sequence belongs to the cytochrome P450 family. Heme is required as a cofactor.

It localises to the membrane. The protein operates within secondary metabolite biosynthesis; terpenoid biosynthesis. Cytochrome P450 monooxygenase; part of the gene cluster that mediates the biosynthesis of viridicatumtoxin, a tetracycline-like fungal meroterpenoid with a unique, fused spirobicyclic ring system. The first step of the pathway is the production of the malonamoyl-CoA starter unit for the polyketide synthase vrtA. The aldolase vrtJ may be involved in the synthesis of the malonamate substrate for malonamoyl-CoA synthetase vrtB. The polyketide synthase vrtA then may utilize the malonamoyl-CoA starter unit, followed by sequential condensation of eight malonyl-CoA units to form the polyketide backbone. The cyclization of the last ring could be mediated by the lactamase-like protein vrtG. The proposed post-PKS tailoring steps are a hydroxylation at C5 catalyzed the cytochrome P450 monooxygenase vrtE, a hydroxylation at C12a catalyzed by VrtH and/or VrtI, and an O-methylation by the O-methyltransferase vrtF. VrtC is then proposed to catalyze the transfer of a geranyl group synthesized by vrtD to the aromatic C ring of the tetracyclic polyketide intermediate of viridicatumtoxin to yield previridicatumtoxin. Finally, the cytochrome P450 monooxygenase vrtK catalyzes the spirocyclization of the geranyl moiety of previridicatumtoxin to afford viridicatumtoxin. The sequence is that of Cytochrome P450 monooxygenase vrtE from Penicillium aethiopicum.